The following is a 360-amino-acid chain: Carbamoyl phosphate synthase small chain (360 aa).

The tract at residues 1–169 is CPSase; it reads MTKRLLILED…TKTAYPAPGI (169 aa). S46, G220, and G222 together coordinate L-glutamine. The 187-residue stretch at 172–358 folds into the Glutamine amidotransferase type-1 domain; the sequence is NIVLVDFGLK…LEMIDSWRCT (187 aa). The Nucleophile role is filled by C247. Positions 248, 251, 289, 291, and 292 each coordinate L-glutamine. Active-site residues include H331 and D333.

Belongs to the CarA family. In terms of assembly, composed of two chains; the small (or glutamine) chain promotes the hydrolysis of glutamine to ammonia, which is used by the large (or ammonia) chain to synthesize carbamoyl phosphate. Tetramer of heterodimers (alpha,beta)4.

It catalyses the reaction hydrogencarbonate + L-glutamine + 2 ATP + H2O = carbamoyl phosphate + L-glutamate + 2 ADP + phosphate + 2 H(+). It carries out the reaction L-glutamine + H2O = L-glutamate + NH4(+). The protein operates within amino-acid biosynthesis; L-arginine biosynthesis; carbamoyl phosphate from bicarbonate: step 1/1. It participates in pyrimidine metabolism; UMP biosynthesis via de novo pathway; (S)-dihydroorotate from bicarbonate: step 1/3. Its function is as follows. Small subunit of the glutamine-dependent carbamoyl phosphate synthetase (CPSase). CPSase catalyzes the formation of carbamoyl phosphate from the ammonia moiety of glutamine, carbonate, and phosphate donated by ATP, constituting the first step of 2 biosynthetic pathways, one leading to arginine and/or urea and the other to pyrimidine nucleotides. The small subunit (glutamine amidotransferase) binds and cleaves glutamine to supply the large subunit with the substrate ammonia. The chain is Carbamoyl phosphate synthase small chain from Streptococcus pyogenes serotype M3 (strain SSI-1).